We begin with the raw amino-acid sequence, 243 residues long: Proteasome subunit beta (243 aa).

The propeptide at 1-49 (MRTPTGDLSDGPAEELGRDQPVFGPEIGEFEHSERRAAQADGEGEMKTG) is removed in mature form; by autocatalysis. The disordered stretch occupies residues 1–50 (MRTPTGDLSDGPAEELGRDQPVFGPEIGEFEHSERRAAQADGEGEMKTGT). Basic and acidic residues predominate over residues 29-38 (EFEHSERRAA). Thr-50 serves as the catalytic Nucleophile.

It belongs to the peptidase T1B family. In terms of assembly, the 20S proteasome core is composed of 14 alpha and 14 beta subunits that assemble into four stacked heptameric rings, resulting in a barrel-shaped structure. The two inner rings, each composed of seven catalytic beta subunits, are sandwiched by two outer rings, each composed of seven alpha subunits. The catalytic chamber with the active sites is on the inside of the barrel. Has a gated structure, the ends of the cylinder being occluded by the N-termini of the alpha-subunits. Is capped at one or both ends by the proteasome regulatory ATPase, PAN.

Its subcellular location is the cytoplasm. The catalysed reaction is Cleavage of peptide bonds with very broad specificity.. Its activity is regulated as follows. The formation of the proteasomal ATPase PAN-20S proteasome complex, via the docking of the C-termini of PAN into the intersubunit pockets in the alpha-rings, triggers opening of the gate for substrate entry. Interconversion between the open-gate and close-gate conformations leads to a dynamic regulation of the 20S proteasome proteolysis activity. Its function is as follows. Component of the proteasome core, a large protease complex with broad specificity involved in protein degradation. In Halorubrum lacusprofundi (strain ATCC 49239 / DSM 5036 / JCM 8891 / ACAM 34), this protein is Proteasome subunit beta.